Reading from the N-terminus, the 233-residue chain is Superoxide dismutase [Mn], mitochondrial (233 aa).

The transit peptide at 1–26 directs the protein to the mitochondrion; that stretch reads MFAKTAAANLTKKGGLSLLSTTARRT. Mn(2+) contacts are provided by His-52 and His-107. Thr-147 and Thr-149 each carry phosphothreonine. Mn(2+) contacts are provided by Asp-194 and His-198.

The protein belongs to the iron/manganese superoxide dismutase family. As to quaternary structure, homotetramer. It depends on Mn(2+) as a cofactor.

The protein resides in the mitochondrion matrix. The catalysed reaction is 2 superoxide + 2 H(+) = H2O2 + O2. In terms of biological role, destroys superoxide anion radicals which are normally produced within the cells and which are toxic to biological systems. The chain is Superoxide dismutase [Mn], mitochondrial (SOD2) from Saccharomyces cerevisiae (strain ATCC 204508 / S288c) (Baker's yeast).